Here is a 381-residue protein sequence, read N- to C-terminus: O-phospho-L-seryl-tRNA:Cys-tRNA synthase (381 aa).

Residues 86 to 87, Asn192, and 215 to 217 contribute to the pyridoxal 5'-phosphate site; these read AR and SGH. Lys218 carries the N6-(pyridoxal phosphate)lysine modification.

It belongs to the SepCysS family. As to quaternary structure, homodimer. Interacts with SepRS. Pyridoxal 5'-phosphate is required as a cofactor.

The catalysed reaction is O-phospho-L-seryl-tRNA(Cys) + hydrogen sulfide + H(+) = L-cysteinyl-tRNA(Cys) + phosphate. Functionally, converts O-phospho-L-seryl-tRNA(Cys) (Sep-tRNA(Cys)) to L-cysteinyl-tRNA(Cys) (Cys-tRNA(Cys)). The sequence is that of O-phospho-L-seryl-tRNA:Cys-tRNA synthase from Methanococcus vannielii (strain ATCC 35089 / DSM 1224 / JCM 13029 / OCM 148 / SB).